The chain runs to 250 residues: Ubiquinone/menaquinone biosynthesis C-methyltransferase UbiE (250 aa).

S-adenosyl-L-methionine is bound by residues threonine 73, aspartate 94, and 122–123; that span reads DA.

The protein belongs to the class I-like SAM-binding methyltransferase superfamily. MenG/UbiE family.

It carries out the reaction a 2-demethylmenaquinol + S-adenosyl-L-methionine = a menaquinol + S-adenosyl-L-homocysteine + H(+). The enzyme catalyses a 2-methoxy-6-(all-trans-polyprenyl)benzene-1,4-diol + S-adenosyl-L-methionine = a 5-methoxy-2-methyl-3-(all-trans-polyprenyl)benzene-1,4-diol + S-adenosyl-L-homocysteine + H(+). It participates in quinol/quinone metabolism; menaquinone biosynthesis; menaquinol from 1,4-dihydroxy-2-naphthoate: step 2/2. The protein operates within cofactor biosynthesis; ubiquinone biosynthesis. Functionally, methyltransferase required for the conversion of demethylmenaquinol (DMKH2) to menaquinol (MKH2) and the conversion of 2-polyprenyl-6-methoxy-1,4-benzoquinol (DDMQH2) to 2-polyprenyl-3-methyl-6-methoxy-1,4-benzoquinol (DMQH2). The sequence is that of Ubiquinone/menaquinone biosynthesis C-methyltransferase UbiE from Coxiella burnetii (strain CbuK_Q154) (Coxiella burnetii (strain Q154)).